The chain runs to 229 residues: UPF0500 protein C1orf216 (229 aa).

Residues 1-144 (MFAIQPGLAE…RGPGPPDPLL (144 aa)) are disordered. Positions 62–71 (SESPSDNQAF) are enriched in polar residues. Composition is skewed to low complexity over residues 84–93 (PPEGAEIPGA) and 115–126 (SSSLSIDSRSSS).

This sequence belongs to the UPF0500 family.

The polypeptide is UPF0500 protein C1orf216 (C1orf216) (Homo sapiens (Human)).